Consider the following 274-residue polypeptide: 4-diphosphocytidyl-2-C-methyl-D-erythritol kinase (274 aa).

Lys-10 is a catalytic residue. ATP is bound at residue 101–111 (PTQAGLGGGSA). The active site involves Asp-143.

It belongs to the GHMP kinase family. IspE subfamily.

It carries out the reaction 4-CDP-2-C-methyl-D-erythritol + ATP = 4-CDP-2-C-methyl-D-erythritol 2-phosphate + ADP + H(+). It functions in the pathway isoprenoid biosynthesis; isopentenyl diphosphate biosynthesis via DXP pathway; isopentenyl diphosphate from 1-deoxy-D-xylulose 5-phosphate: step 3/6. Its function is as follows. Catalyzes the phosphorylation of the position 2 hydroxy group of 4-diphosphocytidyl-2C-methyl-D-erythritol. The sequence is that of 4-diphosphocytidyl-2-C-methyl-D-erythritol kinase from Helicobacter pylori (strain J99 / ATCC 700824) (Campylobacter pylori J99).